The sequence spans 526 residues: O-phosphoserine--tRNA(Cys) ligase (526 aa).

Residues 189-191, 234-236, 276-277, and N319 contribute to the substrate site; these read HMT, SAS, and YY.

It belongs to the class-II aminoacyl-tRNA synthetase family. O-phosphoseryl-tRNA(Cys) synthetase subfamily. As to quaternary structure, homotetramer. Interacts with SepCysS.

The catalysed reaction is tRNA(Cys) + O-phospho-L-serine + ATP = O-phospho-L-seryl-tRNA(Cys) + AMP + diphosphate. Catalyzes the attachment of O-phosphoserine (Sep) to tRNA(Cys). In Methanocorpusculum labreanum (strain ATCC 43576 / DSM 4855 / Z), this protein is O-phosphoserine--tRNA(Cys) ligase.